A 217-amino-acid chain; its full sequence is Probable transaldolase (217 aa).

Residue lysine 83 is the Schiff-base intermediate with substrate of the active site.

It belongs to the transaldolase family. Type 3B subfamily.

It localises to the cytoplasm. It carries out the reaction D-sedoheptulose 7-phosphate + D-glyceraldehyde 3-phosphate = D-erythrose 4-phosphate + beta-D-fructose 6-phosphate. It functions in the pathway carbohydrate degradation; pentose phosphate pathway; D-glyceraldehyde 3-phosphate and beta-D-fructose 6-phosphate from D-ribose 5-phosphate and D-xylulose 5-phosphate (non-oxidative stage): step 2/3. Functionally, transaldolase is important for the balance of metabolites in the pentose-phosphate pathway. This chain is Probable transaldolase, found in Ruegeria pomeroyi (strain ATCC 700808 / DSM 15171 / DSS-3) (Silicibacter pomeroyi).